A 252-amino-acid chain; its full sequence is Ribonuclease HII (252 aa).

In terms of domain architecture, RNase H type-2 spans 68–252 (EYVAGLDEVG…FGPVRDRLRS (185 aa)). A divalent metal cation is bound by residues aspartate 74, glutamate 75, and aspartate 165.

This sequence belongs to the RNase HII family. Requires Mn(2+) as cofactor. The cofactor is Mg(2+).

The protein localises to the cytoplasm. It carries out the reaction Endonucleolytic cleavage to 5'-phosphomonoester.. Endonuclease that specifically degrades the RNA of RNA-DNA hybrids. The protein is Ribonuclease HII of Lacticaseibacillus paracasei (strain ATCC 334 / BCRC 17002 / CCUG 31169 / CIP 107868 / KCTC 3260 / NRRL B-441) (Lactobacillus paracasei).